The primary structure comprises 202 residues: Ribosome maturation factor RimP (202 aa).

Belongs to the RimP family.

The protein resides in the cytoplasm. In terms of biological role, required for maturation of 30S ribosomal subunits. In Paracidovorax citrulli (strain AAC00-1) (Acidovorax citrulli), this protein is Ribosome maturation factor RimP.